The sequence spans 498 residues: MRINPTTSXPGVSTLGKKIPGRIAQIIGPVLDVAFPPGKMPNIYNSLVVXGRDTAGQQINVTCEVQQLLGNNRVRAVAMSATDGLTRGMEVIDTGAPLSVPVGGCTLGRIFNVLGEPVDNLGPVDTRTTSPIHRSAPAFIQLDTKLSIFETGIKVVDLLAPYRRGGKIGLFGGAGVGKTVLIMELINNIAKAHGGVSVFGGVGERTREGNDLYMEMKESGVINEENIAESKVALVYGQMNEPPGARMRVGLTALTMAEYFRDVNEQDVLLFIDNIFRFVQAGSEVSALLGRMPSAVGYQPTLSTEMGSLQERITSTKEGSITSIQAVYVPADDLTDPAPATTFAHLDATTVLSRGLAAKGIYPAVDPLDSTSTMLQPRIVGEEHYETAQRVKQTLQRYKELQDIIAILGLDELSEEDRLTVARARKIERFLSQPFFVAEVFTGSPGKYVGLAETIRGFQLILSGELDSFPEQAFYLVGNIDETTAKAMNLEVESNLKK.

172-179 (GGAGVGKT) contributes to the ATP binding site.

Belongs to the ATPase alpha/beta chains family. As to quaternary structure, F-type ATPases have 2 components, CF(1) - the catalytic core - and CF(0) - the membrane proton channel. CF(1) has five subunits: alpha(3), beta(3), gamma(1), delta(1), epsilon(1). CF(0) has four main subunits: a(1), b(1), b'(1) and c(9-12).

Its subcellular location is the plastid. It is found in the chloroplast thylakoid membrane. It catalyses the reaction ATP + H2O + 4 H(+)(in) = ADP + phosphate + 5 H(+)(out). Its function is as follows. Produces ATP from ADP in the presence of a proton gradient across the membrane. The catalytic sites are hosted primarily by the beta subunits. The chain is ATP synthase subunit beta, chloroplastic from Brasenia schreberi (Water shield).